Reading from the N-terminus, the 171-residue chain is UPF0398 protein M28_Spy1394 (171 aa).

Belongs to the UPF0398 family.

The polypeptide is UPF0398 protein M28_Spy1394 (Streptococcus pyogenes serotype M28 (strain MGAS6180)).